A 178-amino-acid chain; its full sequence is Large ribosomal subunit protein uL5 (178 aa).

This sequence belongs to the universal ribosomal protein uL5 family. In terms of assembly, part of the 50S ribosomal subunit; part of the 5S rRNA/L5/L18/L25 subcomplex. Contacts the 5S rRNA and the P site tRNA. Forms a bridge to the 30S subunit in the 70S ribosome.

Functionally, this is one of the proteins that bind and probably mediate the attachment of the 5S RNA into the large ribosomal subunit, where it forms part of the central protuberance. In the 70S ribosome it contacts protein S13 of the 30S subunit (bridge B1b), connecting the 2 subunits; this bridge is implicated in subunit movement. Contacts the P site tRNA; the 5S rRNA and some of its associated proteins might help stabilize positioning of ribosome-bound tRNAs. The protein is Large ribosomal subunit protein uL5 of Psychrobacter arcticus (strain DSM 17307 / VKM B-2377 / 273-4).